The chain runs to 70 residues: Enhancer of split m6 protein (70 aa).

This chain is Enhancer of split m6 protein, found in Drosophila melanogaster (Fruit fly).